Here is a 738-residue protein sequence, read N- to C-terminus: DNA topoisomerase 4 subunit A (738 aa).

A Topo IIA-type catalytic domain is found at 32–496 (LPDVRDGLKP…SFEEVDLTNQ (465 aa)). The O-(5'-phospho-DNA)-tyrosine intermediate role is filled by Tyr-120.

Belongs to the type II topoisomerase GyrA/ParC subunit family. ParC type 1 subfamily. Heterotetramer composed of ParC and ParE.

The protein resides in the cell membrane. The catalysed reaction is ATP-dependent breakage, passage and rejoining of double-stranded DNA.. Functionally, topoisomerase IV is essential for chromosome segregation. It relaxes supercoiled DNA. Performs the decatenation events required during the replication of a circular DNA molecule. This chain is DNA topoisomerase 4 subunit A, found in Rickettsia prowazekii (strain Madrid E).